A 406-amino-acid chain; its full sequence is Cysteine desulfurase (406 aa).

The residue at position 226 (Lys226) is an N6-(pyridoxal phosphate)lysine. The active-site Cysteine persulfide intermediate is Cys364.

Belongs to the class-V pyridoxal-phosphate-dependent aminotransferase family. Csd subfamily. As to quaternary structure, homodimer. Interacts with SufE and the SufBCD complex composed of SufB, SufC and SufD. The interaction with SufE is required to mediate the direct transfer of the sulfur atom from the S-sulfanylcysteine. Pyridoxal 5'-phosphate serves as cofactor.

It is found in the cytoplasm. The enzyme catalyses (sulfur carrier)-H + L-cysteine = (sulfur carrier)-SH + L-alanine. It carries out the reaction L-selenocysteine + AH2 = hydrogenselenide + L-alanine + A + H(+). It functions in the pathway cofactor biosynthesis; iron-sulfur cluster biosynthesis. Cysteine desulfurases mobilize the sulfur from L-cysteine to yield L-alanine, an essential step in sulfur metabolism for biosynthesis of a variety of sulfur-containing biomolecules. Component of the suf operon, which is activated and required under specific conditions such as oxidative stress and iron limitation. Acts as a potent selenocysteine lyase in vitro, that mobilizes selenium from L-selenocysteine. Selenocysteine lyase activity is however unsure in vivo. This chain is Cysteine desulfurase, found in Escherichia coli O45:K1 (strain S88 / ExPEC).